The primary structure comprises 73 residues: Translation initiation factor IF-1 (73 aa).

Residues 1-73 (MAKKEDTIVL…TKARVVYRHR (73 aa)) form the S1-like domain.

The protein belongs to the IF-1 family. Component of the 30S ribosomal translation pre-initiation complex which assembles on the 30S ribosome in the order IF-2 and IF-3, IF-1 and N-formylmethionyl-tRNA(fMet); mRNA recruitment can occur at any time during PIC assembly.

Its subcellular location is the cytoplasm. Its function is as follows. One of the essential components for the initiation of protein synthesis. Stabilizes the binding of IF-2 and IF-3 on the 30S subunit to which N-formylmethionyl-tRNA(fMet) subsequently binds. Helps modulate mRNA selection, yielding the 30S pre-initiation complex (PIC). Upon addition of the 50S ribosomal subunit IF-1, IF-2 and IF-3 are released leaving the mature 70S translation initiation complex. In Chlamydia caviae (strain ATCC VR-813 / DSM 19441 / 03DC25 / GPIC) (Chlamydophila caviae), this protein is Translation initiation factor IF-1.